The chain runs to 294 residues: Cutinase (294 aa).

An N-terminal signal peptide occupies residues 1-33 (MLRARPSHRLASAAAVVAATGAALLAGSSPAAA). Cysteine 36 and cysteine 107 are oxidised to a cystine. Residue serine 118 is the Nucleophile of the active site. A disulfide bridge links cysteine 180 with cysteine 187. Aspartate 184 is a catalytic residue. Histidine 198 functions as the Proton donor/acceptor in the catalytic mechanism. The interval 222-241 (GTPTTPTPTPTPTPVPTTCV) is disordered. The span at 226–236 (TPTPTPTPTPV) shows a compositional bias: pro residues. Residues 240–294 (CVRDSTRDHVAADRAVSLYGRAYARGSRDSLGATSSYNVVSLQQVEGGWRLVTAC) form a may be involved in substrate binding region.

The protein belongs to the cutinase family.

Its subcellular location is the secreted. The catalysed reaction is cutin + H2O = cutin monomers.. It carries out the reaction a tetradecanoate ester + H2O = an aliphatic alcohol + tetradecanoate + H(+). The enzyme catalyses hexadecanoate ester + H2O = an aliphatic alcohol + hexadecanoate + H(+). It catalyses the reaction a butanoate ester + H2O = an aliphatic alcohol + butanoate + H(+). The catalysed reaction is an octanoate ester + H2O = an aliphatic alcohol + octanoate + H(+). In terms of biological role, catalyzes the hydrolysis of cutin, a polyester that forms the structure of plant cuticle. Shows esterase activity towards p-nitrophenol-linked aliphatic esters (pNP-aliphatic esters). Can depolymerize synthetic polyesters such as poly(epsilon-caprolactone) (PCL) and poly(1,3-propylene adipate) (PPA). Exhibits some activity on poly(lactic acid) (PLA). Can bind but not hydrolyze poly(hydroxybutyrate) (PHB). The chain is Cutinase from Kineococcus radiotolerans (strain ATCC BAA-149 / DSM 14245 / SRS30216).